Here is a 193-residue protein sequence, read N- to C-terminus: Protein GrpE (193 aa).

A disordered region spans residues 1-26 (MTKKHHKEQEEIQETIKTEAAEENVG). Residues 7-20 (KEQEEIQETIKTEA) show a composition bias toward basic and acidic residues.

This sequence belongs to the GrpE family. In terms of assembly, homodimer.

Its subcellular location is the cytoplasm. Functionally, participates actively in the response to hyperosmotic and heat shock by preventing the aggregation of stress-denatured proteins, in association with DnaK and GrpE. It is the nucleotide exchange factor for DnaK and may function as a thermosensor. Unfolded proteins bind initially to DnaJ; upon interaction with the DnaJ-bound protein, DnaK hydrolyzes its bound ATP, resulting in the formation of a stable complex. GrpE releases ADP from DnaK; ATP binding to DnaK triggers the release of the substrate protein, thus completing the reaction cycle. Several rounds of ATP-dependent interactions between DnaJ, DnaK and GrpE are required for fully efficient folding. The protein is Protein GrpE of Chlorobaculum parvum (strain DSM 263 / NCIMB 8327) (Chlorobium vibrioforme subsp. thiosulfatophilum).